Reading from the N-terminus, the 393-residue chain is Cell division protein FtsZ 2 (393 aa).

Residues 1 to 28 form a disordered region; sequence MQDIVQDALDNAEAEQREMDGDGDGDEF. Residues 40–44, 127–129, Glu-158, Arg-161, and Asp-204 each bind GTP; these read GAGNN and GTG. The tract at residues 339–393 is disordered; sequence GPSTQKQADKSRRELQDVDSKQRAADDAGAGGFGGAHSDGGQDEVEQENGLDVIR. Residues 345 to 364 show a composition bias toward basic and acidic residues; it reads QADKSRRELQDVDSKQRAAD. Residues 367-376 are compositionally biased toward gly residues; sequence GAGGFGGAHS.

The protein belongs to the FtsZ family. As to quaternary structure, homodimer. Polymerizes to form a dynamic ring structure in a strictly GTP-dependent manner. Interacts directly with several other division proteins.

Its subcellular location is the cytoplasm. Functionally, essential cell division protein that forms a contractile ring structure (Z ring) at the future cell division site. The regulation of the ring assembly controls the timing and the location of cell division. One of the functions of the FtsZ ring is to recruit other cell division proteins to the septum to produce a new cell wall between the dividing cells. Binds GTP and shows GTPase activity. Overexpression causes significant changes in cell morphology. This chain is Cell division protein FtsZ 2, found in Halobacterium salinarum (strain ATCC 29341 / DSM 671 / R1).